Consider the following 178-residue polypeptide: Caveolin-1 (178 aa).

N-acetylserine is present on Ser-2. Residue Ser-2 is modified to Phosphoserine. Residues 2-94 are required for homooligomerization; sequence SGGKYVDSEG…WKASFTTFTV (93 aa). Topologically, residues 2–104 are cytoplasmic; it reads SGGKYVDSEG…TKYWFYRLLS (103 aa). Lys-5 is modified (N6-acetyllysine; alternate). Residue Lys-5 forms a Glycyl lysine isopeptide (Lys-Gly) (interchain with G-Cter in ubiquitin); alternate linkage. Tyr-6 carries the post-translational modification Phosphotyrosine. Position 9 is a phosphoserine (Ser-9). Tyr-14 is modified (phosphotyrosine; by ABL1). Tyr-25 is subject to Phosphotyrosine. Residues Lys-26, Lys-30, Lys-39, Lys-47, and Lys-57 each participate in a glycyl lysine isopeptide (Lys-Gly) (interchain with G-Cter in ubiquitin) cross-link. Residues 82–94 are interaction with CAVIN3; sequence DGIWKASFTTFTV. The helical intramembrane region spans 105–125; the sequence is TIFGIPMALIWGIYFAILSFL. The Cytoplasmic segment spans residues 126-178; the sequence is HIWAVVPCIKSFLIEIQCISRVYSIYVHTFCDPLFEAIGKIFSNVRISMQKEI. The interacts with SPRY1, SPRY2, SPRY3 and SPRY4 stretch occupies residues 131-142; sequence VPCIKSFLIEIQ. 3 S-palmitoyl cysteine lipidation sites follow: Cys-133, Cys-143, and Cys-156. The segment at 149–160 is interacts with SPRY1, SPRY2, and SPRY4; that stretch reads SIYVHTFCDPLF. An interacts with SPRY1, SPRY2, SPRY3 and SPRY4 region spans residues 167 to 178; sequence FSNVRISMQKEI.

Belongs to the caveolin family. As to quaternary structure, homooligomer. Interacts with GLIPR2. Interacts with NOSTRIN. Interacts with SNAP25 and STX1A. Interacts (via the N-terminus) with DPP4; the interaction is direct. Interacts with CTNNB1, CDH1 and JUP. Interacts with PACSIN2; this interaction induces membrane tubulation. Interacts with SLC7A9. Interacts with BMX and BTK. Interacts with TGFBR1. Interacts with CAVIN3 (via leucine-zipper domain) in a cholesterol-sensitive manner. Interacts with CAVIN1. Interacts with EHD2 in a cholesterol-dependent manner. Forms a ternary complex with UBXN6 and VCP; mediates CAV1 targeting to lysosomes for degradation. Interacts with ABCG1; this interaction regulates ABCG1-mediated cholesterol efflux. Interacts with NEU3; this interaction enhances NEU3 sialidase activity within caveola. Interacts (via C-terminus) with SPRY1, SPRY2 (via C-terminus), SPRY3, and SPRY4. Interacts with IGFBP5; this interaction allows trafficking of IGFBP5 from the plasma membrane to the nucleus. Phosphorylated at Tyr-14 by ABL1 in response to oxidative stress. In terms of processing, ubiquitinated. Undergo monoubiquitination and multi- and/or polyubiquitination. Monoubiquitination of N-terminal lysines promotes integration in a ternary complex with UBXN6 and VCP which promotes oligomeric CAV1 targeting to lysosomes for degradation. Ubiquitinated by ZNRF1; leading to degradation and modulation of the TLR4-mediated immune response.

It is found in the golgi apparatus membrane. The protein resides in the cell membrane. It localises to the membrane. The protein localises to the caveola. Its subcellular location is the membrane raft. Functionally, may act as a scaffolding protein within caveolar membranes. Forms a stable heterooligomeric complex with CAV2 that targets to lipid rafts and drives caveolae formation. Mediates the recruitment of CAVIN proteins (CAVIN1/2/3/4) to the caveolae. Interacts directly with G-protein alpha subunits and can functionally regulate their activity. Involved in the costimulatory signal essential for T-cell receptor (TCR)-mediated T-cell activation. Its binding to DPP4 induces T-cell proliferation and NF-kappa-B activation in a T-cell receptor/CD3-dependent manner. Recruits CTNNB1 to caveolar membranes and may regulate CTNNB1-mediated signaling through the Wnt pathway. Negatively regulates TGFB1-mediated activation of SMAD2/3 by mediating the internalization of TGFBR1 from membrane rafts leading to its subsequent degradation. Binds 20(S)-hydroxycholesterol (20(S)-OHC). The sequence is that of Caveolin-1 (CAV1) from Oryctolagus cuniculus (Rabbit).